Reading from the N-terminus, the 541-residue chain is Plasminogen-binding protein PgbB (541 aa).

2 stretches are compositionally biased toward basic and acidic residues: residues 420–434 (HKAK…ENKV) and 446–455 (VKTRRPEPTK). Residues 420 to 541 (HKAKENKQPL…RRKALEMNKK (122 aa)) form a disordered region. The span at 456–476 (DQNNAIQQGETKNNESKNTPI) shows a compositional bias: polar residues. Over residues 480 to 541 (NAAKKEAPKP…RRKALEMNKK (62 aa)) the composition is skewed to basic and acidic residues.

The protein resides in the cell surface. Functionally, binds plasminogen, specifically, and in a concentration and lysine-dependent manner. Plasminogen is the precursor of plasmin, a serine protease that cleaves fibrin, fibronectin, laminin and vitronectin. Acquisition of plasminogen/plasmin could enable H.pylori to degrade host components. In Helicobacter pylori (strain J99 / ATCC 700824) (Campylobacter pylori J99), this protein is Plasminogen-binding protein PgbB (pgbB).